A 205-amino-acid polypeptide reads, in one-letter code: ATP synthase subunit b 1 (205 aa).

Residues 1 to 15 show a composition bias toward polar residues; that stretch reads MFVSTAFAQTATESQ. The segment at 1 to 26 is disordered; the sequence is MFVSTAFAQTATESQPAPAAGEHGAA. Low complexity predominate over residues 16–26; the sequence is PAPAAGEHGAA. The chain crosses the membrane as a helical span at residues 56 to 78; sequence SQILWLAITFGLFYLFMSRVVLP.

This sequence belongs to the ATPase B chain family. F-type ATPases have 2 components, F(1) - the catalytic core - and F(0) - the membrane proton channel. F(1) has five subunits: alpha(3), beta(3), gamma(1), delta(1), epsilon(1). F(0) has three main subunits: a(1), b(2) and c(10-14). The alpha and beta chains form an alternating ring which encloses part of the gamma chain. F(1) is attached to F(0) by a central stalk formed by the gamma and epsilon chains, while a peripheral stalk is formed by the delta and b chains.

The protein resides in the cell inner membrane. F(1)F(0) ATP synthase produces ATP from ADP in the presence of a proton or sodium gradient. F-type ATPases consist of two structural domains, F(1) containing the extramembraneous catalytic core and F(0) containing the membrane proton channel, linked together by a central stalk and a peripheral stalk. During catalysis, ATP synthesis in the catalytic domain of F(1) is coupled via a rotary mechanism of the central stalk subunits to proton translocation. Functionally, component of the F(0) channel, it forms part of the peripheral stalk, linking F(1) to F(0). The protein is ATP synthase subunit b 1 of Brucella anthropi (strain ATCC 49188 / DSM 6882 / CCUG 24695 / JCM 21032 / LMG 3331 / NBRC 15819 / NCTC 12168 / Alc 37) (Ochrobactrum anthropi).